The primary structure comprises 156 residues: MSRRRKAEKREVLPDAKFGDVVLTKFMNCLMYDGKKSVAESIVYGALDRIEAKAKQNALQLFHDALNNVRPYLEVRSRRVGGATYQVPVEVRSERAQALAIRWIISAARGRSEDTMTERLSAELLDAANQRGTAVKKREDTHRMAEANKAFSHYRW.

It belongs to the universal ribosomal protein uS7 family. Part of the 30S ribosomal subunit. Contacts proteins S9 and S11.

In terms of biological role, one of the primary rRNA binding proteins, it binds directly to 16S rRNA where it nucleates assembly of the head domain of the 30S subunit. Is located at the subunit interface close to the decoding center, probably blocks exit of the E-site tRNA. The polypeptide is Small ribosomal subunit protein uS7 (Rhodospirillum centenum (strain ATCC 51521 / SW)).